The chain runs to 643 residues: Phosphatidylinositol-3,5-bisphosphate 3-phosphatase MTMR2 (643 aa).

Polar residues-rich tracts occupy residues 1-12 and 23-40; these read MEKSSSCESLGS and DSLSSASTSHSENSVHTK. The segment at 1 to 54 is disordered; sequence MEKSSSCESLGSQPAVARPPSVDSLSSASTSHSENSVHTKSASVVSSDSISTSA. Serine 6 and serine 9 each carry phosphoserine. Low complexity predominate over residues 41–54; it reads SASVVSSDSISTSA. Serine 58 is modified (phosphoserine). A GRAM domain is found at 68–139; it reads NKLAEMEEPP…GVISRVEKIG (72 aa). The 376-residue stretch at 205-580 folds into the Myotubularin phosphatase domain; sequence GWKLYDSLSE…RHLELWVGYY (376 aa). The a 1,2-diacyl-sn-glycero-3-phospho-(1D-myo-inositol-3,5-bisphosphate) site is built by asparagine 330, asparagine 355, and isoleucine 356. The a 1,2-diacyl-sn-glycero-3-phospho-(1D-myo-inositol-3-phosphate) site is built by asparagine 330, asparagine 355, and isoleucine 356. Cysteine 417 (phosphocysteine intermediate) is an active-site residue. A 1,2-diacyl-sn-glycero-3-phospho-(1D-myo-inositol-3,5-bisphosphate)-binding residues include serine 418, aspartate 419, glycine 420, tryptophan 421, aspartate 422, arginine 423, arginine 459, and arginine 463. A 1,2-diacyl-sn-glycero-3-phospho-(1D-myo-inositol-3-phosphate)-binding residues include serine 418, aspartate 419, glycine 420, tryptophan 421, aspartate 422, and arginine 423. Arginine 463 provides a ligand contact to a 1,2-diacyl-sn-glycero-3-phospho-(1D-myo-inositol-3-phosphate). The stretch at 593–627 forms a coiled coil; sequence IHNRYKELLAKRAELQKKVEELQREISNRSTSSSE. Positions 614–643 are disordered; it reads LQREISNRSTSSSERAGSPAQCVTPVQTVV.

This sequence belongs to the protein-tyrosine phosphatase family. Non-receptor class myotubularin subfamily. As to quaternary structure, homodimer (via coiled-coil domain). Heterotetramer consisting of one MTMR2 dimer and one SBF2/MTMR13 dimer; specifically in peripheral nerves stabilizes SBF2/MTMR13 at the membranes and increases MTMR2 catalytic activity towards phosphatidylinositol 3,5-bisphosphate and to a lesser extent towards phosphatidylinositol 3-phosphate. Heterodimer with SBF1/MTMR5; acts as an adapter for the phosphatase MTMR2 to regulate MTMR2 catalytic activity and subcellular location. Heterodimer with MTMR12. Phosphorylation at Ser-58 decreases MTMR2 localization to endocytic vesicular structures.

Its subcellular location is the cytoplasm. It localises to the early endosome membrane. The protein resides in the perinuclear region. The protein localises to the cell projection. It is found in the axon. Its subcellular location is the endosome membrane. The enzyme catalyses a 1,2-diacyl-sn-glycero-3-phospho-(1D-myo-inositol-3,5-bisphosphate) + H2O = a 1,2-diacyl-sn-glycero-3-phospho-(1D-myo-inositol-5-phosphate) + phosphate. It catalyses the reaction a 1,2-diacyl-sn-glycero-3-phospho-(1D-myo-inositol-3-phosphate) + H2O = a 1,2-diacyl-sn-glycero-3-phospho-(1D-myo-inositol) + phosphate. The catalysed reaction is 1,2-dioctanoyl-sn-glycero-3-phospho-(1-D-myo-inositol-3-phosphate) + H2O = 1,2-dioctanoyl-sn-glycero-3-phospho-(1D-myo-inositol) + phosphate. It carries out the reaction 1,2-dioctanoyl-sn-glycero-3-phospho-(1D-myo-inositol-3,5-bisphosphate) + H2O = 1,2-dioctanoyl-sn-glycero-3-phospho-(1D-myo-inositol-5-phosphate) + phosphate. Functionally, lipid phosphatase that specifically dephosphorylates the D-3 position of phosphatidylinositol 3-phosphate and phosphatidylinositol 3,5-bisphosphate, generating phosphatidylinositol and phosphatidylinositol 5-phosphate. Regulates the level of these phosphoinositides critical for various biological processes including autophagy initiation and autophagosome maturation. This Bos taurus (Bovine) protein is Phosphatidylinositol-3,5-bisphosphate 3-phosphatase MTMR2.